Here is a 320-residue protein sequence, read N- to C-terminus: Tyrosine phosphatase H3 (320 aa).

The Tyrosine-protein phosphatase domain maps to 22 to 309; sequence NFWEFVRLEH…AFCYKAVRYA (288 aa). Cys250 serves as the catalytic Phosphocysteine intermediate.

It belongs to the protein-tyrosine phosphatase family.

It carries out the reaction O-phospho-L-tyrosyl-[protein] + H2O = L-tyrosyl-[protein] + phosphate. In terms of biological role, suppresses host immune cell adhesion and phagocytosis. In Microplitis demolitor (Parasitoid wasp), this protein is Tyrosine phosphatase H3 (H3).